The following is a 30-amino-acid chain: Snaclec carinactivase-1 regulatory subunit 14 kDa chain (30 aa).

A C-type lectin domain is found at 1–30 (DCLPDWFHYEGHCYRVFDEPKKWADAEKFC). Cysteine 2 and cysteine 13 are joined by a disulfide.

Belongs to the snaclec family. Heterodimer of a metalloproteinase subunit and a regulatory subunit comprising two polypeptides disulfide-linked (14 kDa and 17 kDa chains). Expressed by the venom gland.

It localises to the secreted. Its function is as follows. Calcium-dependent prothrombin activator. This protein may activate prothrombin via recognition by the regulatory subunit of the calcium ion bound conformation of its gamma-carboxyglutamic acid (GLA) domain, and the subsequent conversion of prothrombin to active thrombin is catalyzed by the catalytic subunit. The sequence is that of Snaclec carinactivase-1 regulatory subunit 14 kDa chain from Echis carinatus (Saw-scaled viper).